The following is a 778-amino-acid chain: Probable glutamine--tRNA ligase (778 aa).

Residues Leu188–Ala205 are compositionally biased toward basic and acidic residues. Positions Leu188–Asp219 are disordered. Positions Pro273–His283 match the 'HIGH' region motif. Residues Glu274 to Asn276 and His280 to Ala286 each bind ATP. Positions 306 and 441 each coordinate L-glutamine. ATP contacts are provided by residues Thr460, Arg489–Leu490, and Val497–Lys499. Residues Leu496 to Arg500 carry the 'KMSKS' region motif.

It belongs to the class-I aminoacyl-tRNA synthetase family.

It catalyses the reaction tRNA(Gln) + L-glutamine + ATP = L-glutaminyl-tRNA(Gln) + AMP + diphosphate. The sequence is that of Probable glutamine--tRNA ligase from Drosophila melanogaster (Fruit fly).